A 90-amino-acid polypeptide reads, in one-letter code: Molybdopterin synthase sulfur carrier subunit (90 aa).

The residue at position 90 (Gly90) is a 1-thioglycine; alternate. Gly90 carries the glycyl adenylate; alternate modification.

This sequence belongs to the MoaD family. MOCS2A subfamily. Heterotetramer; composed of 2 small (Mocs2A) and 2 large (Mocs2B) subunits. C-terminal thiocarboxylation occurs in 2 steps, it is first acyl-adenylated (-COAMP) via the hesA/moeB/thiF part of MOCS3, then thiocarboxylated (-COSH) via the rhodanese domain of MOCS3.

Its subcellular location is the cytoplasm. It functions in the pathway cofactor biosynthesis; molybdopterin biosynthesis. Functionally, acts as a sulfur carrier required for molybdopterin biosynthesis. Component of the molybdopterin synthase complex that catalyzes the conversion of precursor Z into molybdopterin by mediating the incorporation of 2 sulfur atoms into precursor Z to generate a dithiolene group. In the complex, serves as sulfur donor by being thiocarboxylated (-COSH) at its C-terminus by MOCS3. After interaction with Mocs2B, the sulfur is then transferred to precursor Z to form molybdopterin. The chain is Molybdopterin synthase sulfur carrier subunit from Drosophila simulans (Fruit fly).